Reading from the N-terminus, the 394-residue chain is Protein maelstrom (394 aa).

Positions 2–69 (APKKQNGFMM…ARRDKRGSLN (68 aa)) form a DNA-binding region, HMG box. The interval 44-93 (TQQRGPYNSDAKDANAARRDKRGSLNGHGQVDKAQREAAESLMDKAQREA) is disordered. Basic and acidic residues predominate over residues 73–93 (QVDKAQREAAESLMDKAQREA).

The protein belongs to the maelstrom family.

Its subcellular location is the cytoplasm. It localises to the nucleus. Functionally, involved both in the piRNA and miRNA metabolic processes. As a component of the meiotic nuage, plays a central role during oogenesis by repressing transposable elements and preventing their mobilization, which is essential for the germline integrity. Repression of transposable elements is mediated via the piRNA metabolic process, which mediates the repression of transposable elements during meiosis by forming complexes composed of piRNAs and Piwi proteins and governs the repression of transposons. As a nuclear component, it is required for proper differentiation in the germline stem cell (GSC) lineage by repressing microRNA-7 (miR-7), thereby acting as an indirect regulator of bag-of-marbles (Bam). Acts by binding to the promoter of miR-7 gene and repressing its expression; miR-7 repression alleviates the Bam repression by miR-7, thereby allowing differentiation in the germline stem cell (GSC) lineage. The polypeptide is Protein maelstrom (mael) (Drosophila sechellia (Fruit fly)).